Reading from the N-terminus, the 354-residue chain is Anthranilate phosphoribosyltransferase (354 aa).

5-phospho-alpha-D-ribose 1-diphosphate is bound by residues G94, 97–98, T102, 104–107, 122–130, and S134; these read GD, NIST, and KHGNRAASS. Anthranilate is bound at residue G94. Residue S106 participates in Mg(2+) binding. N125 is a binding site for anthranilate. R180 serves as a coordination point for anthranilate. 2 residues coordinate Mg(2+): D238 and E239.

It belongs to the anthranilate phosphoribosyltransferase family. As to quaternary structure, homodimer. Mg(2+) is required as a cofactor.

It catalyses the reaction N-(5-phospho-beta-D-ribosyl)anthranilate + diphosphate = 5-phospho-alpha-D-ribose 1-diphosphate + anthranilate. Its pathway is amino-acid biosynthesis; L-tryptophan biosynthesis; L-tryptophan from chorismate: step 2/5. Catalyzes the transfer of the phosphoribosyl group of 5-phosphorylribose-1-pyrophosphate (PRPP) to anthranilate to yield N-(5'-phosphoribosyl)-anthranilate (PRA). This chain is Anthranilate phosphoribosyltransferase, found in Streptomyces griseus subsp. griseus (strain JCM 4626 / CBS 651.72 / NBRC 13350 / KCC S-0626 / ISP 5235).